The primary structure comprises 192 residues: Thymidine kinase (192 aa).

ATP contacts are provided by residues 9–16 and 87–90; these read SAMNAGKS and DECQ. Glu88 functions as the Proton acceptor in the catalytic mechanism. The Zn(2+) site is built by Cys145, Cys147, Cys182, and His185.

Belongs to the thymidine kinase family. As to quaternary structure, homotetramer.

The protein resides in the cytoplasm. It carries out the reaction thymidine + ATP = dTMP + ADP + H(+). This is Thymidine kinase from Vibrio parahaemolyticus serotype O3:K6 (strain RIMD 2210633).